The following is a 577-amino-acid chain: Steryl-sulfatase (577 aa).

A signal peptide spans 1 to 19 (MLWPCLLALLLSQLNFLCA). The Lumenal segment spans residues 21–183 (RPGPGPNFLL…GTVFGSAQQV (163 aa)). Residues D34 and D35 each contribute to the Ca(2+) site. N-linked (GlcNAc...) asparagine glycosylation is present at N46. C74 serves as a coordination point for Ca(2+). C74 acts as the Nucleophile in catalysis. The residue at position 74 (C74) is a 3-oxoalanine (Cys). Residue H135 is part of the active site. 2 disulfide bridges follow: C140-C147 and C169-C241. Residues 184–207 (FVVLPMNILGAVLLAMALARWAGL) form a helical membrane-spanning segment. Residues 208 to 211 (ARPP) are Cytoplasmic-facing. A helical membrane pass occupies residues 212-233 (GWVFGVTVAAMAAVGGAYVAFL). At 234 to 577 (YHFRPANCFL…PLACRCAGDG (344 aa)) the chain is on the lumenal side. N332 is a glycosylation site (N-linked (GlcNAc...) asparagine). Ca(2+) is bound by residues D341 and H342. Intrachain disulfides connect C445–C488, C480–C486, and C561–C571. N-linked (GlcNAc...) asparagine glycosylation is present at N458.

Belongs to the sulfatase family. Homodimer. Ca(2+) serves as cofactor. Post-translationally, the conversion to 3-oxoalanine (also known as C-formylglycine, FGly), of a serine or cysteine residue in prokaryotes and of a cysteine residue in eukaryotes, is critical for catalytic activity.

Its subcellular location is the microsome membrane. It localises to the endoplasmic reticulum membrane. The enzyme catalyses dehydroepiandrosterone 3-sulfate + H2O = 3beta-hydroxyandrost-5-en-17-one + sulfate + H(+). It carries out the reaction estrone 3-sulfate + H2O = estrone + sulfate + H(+). Its function is as follows. Catalyzes the conversion of sulfated steroid precursors, such as dehydroepiandrosterone sulfate (DHEA-S) and estrone sulfate to the free steroid. This Rattus norvegicus (Rat) protein is Steryl-sulfatase (Sts).